A 198-amino-acid polypeptide reads, in one-letter code: Cyclin-dependent kinase inhibitor 1B (198 aa).

The segment covering 1–12 has biased composition (polar residues); that stretch reads MSNVRVSNGSPT. The segment at 1–30 is disordered; it reads MSNVRVSNGSPTSERRDAKQAEYPKPSACR. Ser-10 carries the post-translational modification Phosphoserine; by UHMK1. Positions 13-22 are enriched in basic and acidic residues; that stretch reads SERRDAKQAE. The interaction with CDK2 stretch occupies residues 51–91; that stretch reads DMEEASQNKWNFDFQNHKPLEGKYEWQEVEKGSLPEFYYRP. Tyr-74 carries the post-translational modification Phosphotyrosine; by SRC. The tract at residues 87–198 is disordered; it reads FYYRPPRPPK…KKPGLRRRQT (112 aa). Position 88 is a phosphotyrosine; by ABL, LYN and SRC (Tyr-88). Residue Tyr-89 is modified to Phosphotyrosine. Residues 104-113 show a composition bias toward polar residues; sequence QESQDVSGTR. A compositionally biased stretch (basic and acidic residues) spans 126 to 137; sequence EDTHLVDQKTDA. The short motif at 153–169 is the Nuclear localization signal element; sequence KRPATDDSSPQNKRANR. Thr-157 bears the Phosphothreonine; by CaMK1, PKB/AKT1 and PIM1 mark. Phosphothreonine is present on Thr-170. The segment covering 175 to 186 has biased composition (polar residues); it reads SDGSPNAGSVEQ. Thr-187 carries the phosphothreonine; by PKB/AKT1, CDK1 and CDK2 modification. Thr-198 carries the post-translational modification Phosphothreonine; by CaMK1, PKB/AKT1, RPS6KA1, RPS6KA3 and PIM1.

The protein belongs to the CDI family. Forms a ternary complex composed of CCNE1, CDK2 and CDKN1B. Interacts directly with CCNE1; the interaction is inhibited by CDK2-dependent phosphorylation on Thr-187. Interacts with COPS5, subunit of the COP9 signalosome complex; the interaction leads to CDKN1B degradation. Interacts with NUP50; the interaction leads to nuclear import and degradation of phosphorylated CDKN1B. Interacts with CCND1 and SNX6. Interacts (Thr-198-phosphorylated form) with 14-3-3 proteins, binds strongly YWHAQ, weakly YWHAE and YWHAH, but not YWHAB nor YWHAZ; the interaction with YWHAQ results in translocation to the cytoplasm. Interacts with AKT1 and LYN; the interactions lead to cytoplasmic mislocation, phosphorylation of CDKN1B and inhibition of cell cycle arrest. Forms a ternary complex with CCNA2 and CDK2; CDKN1B inhibits the kinase activity of CDK2 through conformational rearrangements. Interacts (unphosphorylated form) with CDK2. Forms a complex with CDK2 and SPDYA, but does not directly interact with SPDYA. Forms a ternary complex composed of cyclin D, CDK4 and CDKN1B. Interacts (phosphorylated on Tyr-88 and Tyr-89) with CDK4; the interaction is required for cyclin D and CDK4 complex assembly, induces nuclear translocation and activates the CDK4 kinase activity. Interacts with GRB2. Interacts with PIM1. Identified in a complex with SKP1, SKP2 and CKS1B. Interacts with UHMK1; the interaction leads to cytoplasmic mislocation, phosphorylation of CDKN1B and inhibition of cell cycle arrest. Also interacts with CDK1. Dephosphorylated on Thr-187 by PPM1H, leading to CDKN1B stability. Phosphorylated; phosphorylation occurs on serine, threonine and tyrosine residues. Phosphorylation on Ser-10 is the major site of phosphorylation in resting cells, takes place at the G(0)-G(1) phase and leads to protein stability. Phosphorylation on other sites is greatly enhanced by mitogens, growth factors, cMYC and in certain cancer cell lines. The phosphorylated form found in the cytoplasm is inactivate. Phosphorylation on Thr-198 is required for interaction with 14-3-3 proteins. Phosphorylation on Thr-187, by CDK1 and CDK2 leads to protein ubiquitination and proteasomal degradation. Tyrosine phosphorylation promotes this process. Phosphorylation by PKB/AKT1 can be suppressed by LY294002, an inhibitor of the catalytic subunit of PI3K. Phosphorylation on Tyr-88 and Tyr-89 has no effect on binding CDK2, but is required for binding CDK4. Dephosphorylated on tyrosine residues by G-CSF. Dephosphorylated on Thr-187 by PPM1H, leading to CDKN1B stability. Post-translationally, ubiquitinated; in the cytoplasm by the KPC complex (composed of RNF123/KPC1 and UBAC1/KPC2) and, in the nucleus, by SCF(SKP2). The latter requires prior phosphorylation on Thr-187. Ubiquitinated; by a TRIM21-containing SCF(SKP2)-like complex; leads to its degradation. In terms of processing, subject to degradation in the lysosome. Interaction with SNX6 promotes lysosomal degradation.

It localises to the nucleus. The protein resides in the cytoplasm. Its subcellular location is the endosome. In terms of biological role, important regulator of cell cycle progression. Inhibits the kinase activity of CDK2 bound to cyclin A, but has little inhibitory activity on CDK2 bound to SPDYA. Involved in G1 arrest. Potent inhibitor of cyclin E- and cyclin A-CDK2 complexes. Forms a complex with cyclin type D-CDK4 complexes and is involved in the assembly, stability, and modulation of CCND1-CDK4 complex activation. Acts either as an inhibitor or an activator of cyclin type D-CDK4 complexes depending on its phosphorylation state and/or stoichometry. The chain is Cyclin-dependent kinase inhibitor 1B (CDKN1B) from Canis lupus familiaris (Dog).